Reading from the N-terminus, the 294-residue chain is Nucleotide-binding protein Cbei_4857 (294 aa).

An ATP-binding site is contributed by 8-15 (GLSGAGKT). 59–62 (DIRG) contributes to the GTP binding site.

The protein belongs to the RapZ-like family.

Its function is as follows. Displays ATPase and GTPase activities. In Clostridium beijerinckii (strain ATCC 51743 / NCIMB 8052) (Clostridium acetobutylicum), this protein is Nucleotide-binding protein Cbei_4857.